Here is a 405-residue protein sequence, read N- to C-terminus: mRNA cap guanine-N(7) methyltransferase (405 aa).

The disordered stretch occupies residues 1-78 (MDNILNPEDN…PRLEEGHGSL (78 aa)). 2 stretches are compositionally biased toward polar residues: residues 9–18 (DNVSQTNTET) and 36–45 (KFTASGQNLD). The segment covering 58–75 (KAGEPESPSKRPRLEEGH) has biased composition (basic and acidic residues). One can recognise an mRNA cap 0 methyltransferase domain in the interval 97–404 (SRIFHLRNFN…IYLLFAFEKQ (308 aa)). 106 to 107 (NN) is a binding site for mRNA. S-adenosyl-L-methionine contacts are provided by K110, G134, D156, D190, Q213, and Y218.

Belongs to the class I-like SAM-binding methyltransferase superfamily. mRNA cap 0 methyltransferase family.

It is found in the nucleus. The enzyme catalyses a 5'-end (5'-triphosphoguanosine)-ribonucleoside in mRNA + S-adenosyl-L-methionine = a 5'-end (N(7)-methyl 5'-triphosphoguanosine)-ribonucleoside in mRNA + S-adenosyl-L-homocysteine. Functionally, catalytic subunit of the mRNA-capping methyltransferase RNMT:RAMAC complex that methylates the N7 position of the added guanosine to the 5'-cap structure of mRNAs. Binds RNA containing 5'-terminal GpppC. The protein is mRNA cap guanine-N(7) methyltransferase (rnmt) of Xenopus tropicalis (Western clawed frog).